The following is a 214-amino-acid chain: Cytochrome b (214 aa).

The next 4 helical transmembrane spans lie at 31–51 (FGSMLMTCLALQTITGFFLAI), 75–96 (WIMQNLHAIGASMFFVCIYIHI), 111–131 (WLSGVILLTALMATAFFGYVL), and 176–196 (FFALHFVLPFIIISMSSIHII). Heme b contacts are provided by His-81 and His-95. Heme b contacts are provided by His-180 and His-194. Residue His-199 coordinates a ubiquinone.

It belongs to the cytochrome b family. The cytochrome bc1 complex contains 3 respiratory subunits (MT-CYB, CYC1 and UQCRFS1), 2 core proteins (UQCRC1 and UQCRC2) and probably 6 low-molecular weight proteins. It depends on heme b as a cofactor.

The protein resides in the mitochondrion inner membrane. Component of the ubiquinol-cytochrome c reductase complex (complex III or cytochrome b-c1 complex) that is part of the mitochondrial respiratory chain. The b-c1 complex mediates electron transfer from ubiquinol to cytochrome c. Contributes to the generation of a proton gradient across the mitochondrial membrane that is then used for ATP synthesis. In Atractaspis micropholis (Mole viper), this protein is Cytochrome b (MT-CYB).